The following is a 37-amino-acid chain: Large ribosomal subunit protein bL36 (37 aa).

Belongs to the bacterial ribosomal protein bL36 family.

The chain is Large ribosomal subunit protein bL36 from Clostridium perfringens (strain ATCC 13124 / DSM 756 / JCM 1290 / NCIMB 6125 / NCTC 8237 / Type A).